The chain runs to 122 residues: Large ribosomal subunit protein bL12 (122 aa).

Belongs to the bacterial ribosomal protein bL12 family. As to quaternary structure, homodimer. Part of the ribosomal stalk of the 50S ribosomal subunit. Forms a multimeric L10(L12)X complex, where L10 forms an elongated spine to which 2 to 4 L12 dimers bind in a sequential fashion. Binds GTP-bound translation factors.

In terms of biological role, forms part of the ribosomal stalk which helps the ribosome interact with GTP-bound translation factors. Is thus essential for accurate translation. In Shewanella putrefaciens (strain CN-32 / ATCC BAA-453), this protein is Large ribosomal subunit protein bL12.